The sequence spans 261 residues: Imidazole glycerol phosphate synthase subunit HisF (261 aa).

Catalysis depends on residues Asp11 and Asp130.

The protein belongs to the HisA/HisF family. Heterodimer of HisH and HisF.

The protein localises to the cytoplasm. It catalyses the reaction 5-[(5-phospho-1-deoxy-D-ribulos-1-ylimino)methylamino]-1-(5-phospho-beta-D-ribosyl)imidazole-4-carboxamide + L-glutamine = D-erythro-1-(imidazol-4-yl)glycerol 3-phosphate + 5-amino-1-(5-phospho-beta-D-ribosyl)imidazole-4-carboxamide + L-glutamate + H(+). It participates in amino-acid biosynthesis; L-histidine biosynthesis; L-histidine from 5-phospho-alpha-D-ribose 1-diphosphate: step 5/9. Functionally, IGPS catalyzes the conversion of PRFAR and glutamine to IGP, AICAR and glutamate. The HisF subunit catalyzes the cyclization activity that produces IGP and AICAR from PRFAR using the ammonia provided by the HisH subunit. In Heliobacterium mobile (Heliobacillus mobilis), this protein is Imidazole glycerol phosphate synthase subunit HisF.